The primary structure comprises 347 residues: Holliday junction branch migration complex subunit RuvB (347 aa).

The interval 1–186 is large ATPase domain (RuvB-L); that stretch reads MKDENSISFL…FGITARFELY (186 aa). Residues L25, R26, G67, K70, T71, T72, 133–135, R176, Y186, and R223 each bind ATP; that span reads EDY. Mg(2+) is bound at residue T71. Positions 187-257 are small ATPAse domain (RuvB-S); it reads SEIELVEIIK…IVSIGLEMLR (71 aa). A head domain (RuvB-H) region spans residues 260-347; that stretch reads GEGLDEQDRN…GLNENQRVSF (88 aa). Residues R315 and R320 each coordinate DNA.

The protein belongs to the RuvB family. In terms of assembly, homohexamer. Forms an RuvA(8)-RuvB(12)-Holliday junction (HJ) complex. HJ DNA is sandwiched between 2 RuvA tetramers; dsDNA enters through RuvA and exits via RuvB. An RuvB hexamer assembles on each DNA strand where it exits the tetramer. Each RuvB hexamer is contacted by two RuvA subunits (via domain III) on 2 adjacent RuvB subunits; this complex drives branch migration. In the full resolvosome a probable DNA-RuvA(4)-RuvB(12)-RuvC(2) complex forms which resolves the HJ.

It is found in the cytoplasm. It carries out the reaction ATP + H2O = ADP + phosphate + H(+). The RuvA-RuvB-RuvC complex processes Holliday junction (HJ) DNA during genetic recombination and DNA repair, while the RuvA-RuvB complex plays an important role in the rescue of blocked DNA replication forks via replication fork reversal (RFR). RuvA specifically binds to HJ cruciform DNA, conferring on it an open structure. The RuvB hexamer acts as an ATP-dependent pump, pulling dsDNA into and through the RuvAB complex. RuvB forms 2 homohexamers on either side of HJ DNA bound by 1 or 2 RuvA tetramers; 4 subunits per hexamer contact DNA at a time. Coordinated motions by a converter formed by DNA-disengaged RuvB subunits stimulates ATP hydrolysis and nucleotide exchange. Immobilization of the converter enables RuvB to convert the ATP-contained energy into a lever motion, pulling 2 nucleotides of DNA out of the RuvA tetramer per ATP hydrolyzed, thus driving DNA branch migration. The RuvB motors rotate together with the DNA substrate, which together with the progressing nucleotide cycle form the mechanistic basis for DNA recombination by continuous HJ branch migration. Branch migration allows RuvC to scan DNA until it finds its consensus sequence, where it cleaves and resolves cruciform DNA. The sequence is that of Holliday junction branch migration complex subunit RuvB from Borreliella burgdorferi (strain ATCC 35210 / DSM 4680 / CIP 102532 / B31) (Borrelia burgdorferi).